Reading from the N-terminus, the 78-residue chain is Putative membrane protein insertion efficiency factor (78 aa).

It belongs to the UPF0161 family.

It is found in the cell inner membrane. Functionally, could be involved in insertion of integral membrane proteins into the membrane. This Prochlorococcus marinus subsp. pastoris (strain CCMP1986 / NIES-2087 / MED4) protein is Putative membrane protein insertion efficiency factor.